We begin with the raw amino-acid sequence, 132 residues long: Small ribosomal subunit protein bS6 (132 aa).

A disordered region spans residues 99–132; the sequence is ASPMVKAKDERRGDRREDFANETADDADAGDSEE. Basic and acidic residues predominate over residues 104-117; sequence KAKDERRGDRREDF. The span at 121–132 shows a compositional bias: acidic residues; that stretch reads TADDADAGDSEE.

This sequence belongs to the bacterial ribosomal protein bS6 family.

In terms of biological role, binds together with bS18 to 16S ribosomal RNA. The chain is Small ribosomal subunit protein bS6 from Serratia proteamaculans (strain 568).